The chain runs to 222 residues: Coiled-coil domain-containing protein 43 homolog (222 aa).

Positions 80 to 111 form a coiled coil; sequence ETENKLKLTNLKLEQELKIKETTQSEINEEEK. 2 disordered regions span residues 102-126 and 159-222; these read TQSE…EQKK and EDNK…KRRL. Basic and acidic residues-rich tracts occupy residues 112–126 and 175–212; these read YENP…EQKK and RIAD…EEKK. A coiled-coil region spans residues 168 to 222; sequence GENLNAKRIADEEKAKREKSKIEHQKKVQRDKEALEKQKRDEEKKKTVKKEKRRL. Over residues 213–222 the composition is skewed to basic residues; the sequence is KTVKKEKRRL.

This sequence belongs to the CCDC43 family.

In Dictyostelium discoideum (Social amoeba), this protein is Coiled-coil domain-containing protein 43 homolog.